Reading from the N-terminus, the 263-residue chain is uncharacterized protein (263 aa).

Residue 31 to 38 (GPTGSGKT) participates in ATP binding.

This sequence belongs to the CbbQ/NirQ/NorQ/GpvN family.

This is an uncharacterized protein from Staphylococcus epidermidis (strain ATCC 35984 / DSM 28319 / BCRC 17069 / CCUG 31568 / BM 3577 / RP62A).